Consider the following 353-residue polypeptide: Photosystem II protein D1 (353 aa).

Thr-2 carries the post-translational modification N-acetylthreonine. Thr-2 carries the phosphothreonine modification. 3 helical membrane passes run 29–46 (YIGWFGVLMIPTLLTATS), 118–133 (HFLLGVACYMGREWEL), and 142–156 (WIAVAYSAPVAAATA). His-118 contacts chlorophyll a. Tyr-126 contributes to the pheophytin a binding site. [CaMn4O5] cluster-binding residues include Asp-170 and Glu-189. The chain crosses the membrane as a helical span at residues 197-218 (FHMLGVAGVFGGSLFSAMHGSL). His-198 is a chlorophyll a binding site. A quinone is bound by residues His-215 and 264–265 (SF). Fe cation is bound at residue His-215. A Fe cation-binding site is contributed by His-272. A helical membrane pass occupies residues 274-288 (FLAAWPVVGIWFTAL). Residues His-332, Glu-333, Asp-342, and Ala-344 each coordinate [CaMn4O5] cluster. Residues 345–353 (AVEAPSTNG) constitute a propeptide that is removed on maturation.

It belongs to the reaction center PufL/M/PsbA/D family. As to quaternary structure, PSII is composed of 1 copy each of membrane proteins PsbA, PsbB, PsbC, PsbD, PsbE, PsbF, PsbH, PsbI, PsbJ, PsbK, PsbL, PsbM, PsbT, PsbX, PsbY, PsbZ, Psb30/Ycf12, at least 3 peripheral proteins of the oxygen-evolving complex and a large number of cofactors. It forms dimeric complexes. It depends on The D1/D2 heterodimer binds P680, chlorophylls that are the primary electron donor of PSII, and subsequent electron acceptors. It shares a non-heme iron and each subunit binds pheophytin, quinone, additional chlorophylls, carotenoids and lipids. D1 provides most of the ligands for the Mn4-Ca-O5 cluster of the oxygen-evolving complex (OEC). There is also a Cl(-1) ion associated with D1 and D2, which is required for oxygen evolution. The PSII complex binds additional chlorophylls, carotenoids and specific lipids. as a cofactor. In terms of processing, tyr-161 forms a radical intermediate that is referred to as redox-active TyrZ, YZ or Y-Z. C-terminally processed by CTPA; processing is essential to allow assembly of the oxygen-evolving complex and thus photosynthetic growth.

It is found in the plastid. The protein localises to the chloroplast thylakoid membrane. It carries out the reaction 2 a plastoquinone + 4 hnu + 2 H2O = 2 a plastoquinol + O2. In terms of biological role, photosystem II (PSII) is a light-driven water:plastoquinone oxidoreductase that uses light energy to abstract electrons from H(2)O, generating O(2) and a proton gradient subsequently used for ATP formation. It consists of a core antenna complex that captures photons, and an electron transfer chain that converts photonic excitation into a charge separation. The D1/D2 (PsbA/PsbD) reaction center heterodimer binds P680, the primary electron donor of PSII as well as several subsequent electron acceptors. In Oenothera parviflora (Small-flowered evening primrose), this protein is Photosystem II protein D1.